A 196-amino-acid chain; its full sequence is Putative NADH dehydrogenase/NAD(P)H nitroreductase Rpal_4764 (196 aa).

Belongs to the nitroreductase family. HadB/RutE subfamily. FMN is required as a cofactor.

The protein is Putative NADH dehydrogenase/NAD(P)H nitroreductase Rpal_4764 of Rhodopseudomonas palustris (strain TIE-1).